Consider the following 405-residue polypeptide: Multidrug resistance protein MdtH (405 aa).

Helical transmembrane passes span Y13 to I33, S34 to L54, M78 to I95, P99 to F116, L139 to L159, L165 to L185, Y213 to I233, A243 to I263, L277 to L297, A299 to E319, L340 to G360, and I365 to Y385.

The protein belongs to the major facilitator superfamily. DHA1 family. MdtH (TC 2.A.1.2.21) subfamily.

The protein resides in the cell inner membrane. The chain is Multidrug resistance protein MdtH from Sodalis glossinidius (strain morsitans).